The following is a 423-amino-acid chain: Glutamate-1-semialdehyde 2,1-aminomutase (423 aa).

Position 266 is an N6-(pyridoxal phosphate)lysine (lysine 266).

The protein belongs to the class-III pyridoxal-phosphate-dependent aminotransferase family. HemL subfamily. Homodimer. The cofactor is pyridoxal 5'-phosphate.

It localises to the cytoplasm. The catalysed reaction is (S)-4-amino-5-oxopentanoate = 5-aminolevulinate. The protein operates within porphyrin-containing compound metabolism; protoporphyrin-IX biosynthesis; 5-aminolevulinate from L-glutamyl-tRNA(Glu): step 2/2. This chain is Glutamate-1-semialdehyde 2,1-aminomutase, found in Nitratidesulfovibrio vulgaris (strain DP4) (Desulfovibrio vulgaris).